The following is a 514-amino-acid chain: Maturase K (514 aa).

Belongs to the intron maturase 2 family. MatK subfamily.

The protein localises to the plastid. It is found in the chloroplast. Usually encoded in the trnK tRNA gene intron. Probably assists in splicing its own and other chloroplast group II introns. The polypeptide is Maturase K (Plantago argentea (Silver plantain)).